Here is a 138-residue protein sequence, read N- to C-terminus: MNTETNALPAWLDKVRWDDNGLVPVIAQEASTNDVLMFAWMNREALAKTIETQRAVYYSRSRKRLWFKGEESGHVQHVHEVRLDCDEDVVLLKVEQVSGIACHTGRHSCFFQKFEGTVDNGDWVAVEPVLKDPEHIYK.

Position 84 (Asp-84) interacts with Mg(2+). Cys-85 is a binding site for Zn(2+). 2 residues coordinate Mg(2+): Asp-86 and Asp-88. Zn(2+) contacts are provided by Cys-102 and Cys-109.

This sequence belongs to the PRA-CH family. In terms of assembly, homodimer. The cofactor is Mg(2+). Zn(2+) serves as cofactor.

The protein resides in the cytoplasm. The catalysed reaction is 1-(5-phospho-beta-D-ribosyl)-5'-AMP + H2O = 1-(5-phospho-beta-D-ribosyl)-5-[(5-phospho-beta-D-ribosylamino)methylideneamino]imidazole-4-carboxamide. Its pathway is amino-acid biosynthesis; L-histidine biosynthesis; L-histidine from 5-phospho-alpha-D-ribose 1-diphosphate: step 3/9. Functionally, catalyzes the hydrolysis of the adenine ring of phosphoribosyl-AMP. The protein is Phosphoribosyl-AMP cyclohydrolase of Burkholderia lata (strain ATCC 17760 / DSM 23089 / LMG 22485 / NCIMB 9086 / R18194 / 383).